The following is a 143-amino-acid chain: Putative pre-16S rRNA nuclease (143 aa).

Belongs to the YqgF nuclease family.

Its subcellular location is the cytoplasm. Could be a nuclease involved in processing of the 5'-end of pre-16S rRNA. This chain is Putative pre-16S rRNA nuclease (ybeB), found in Lactococcus lactis subsp. lactis (strain IL1403) (Streptococcus lactis).